A 118-amino-acid polypeptide reads, in one-letter code: Large ribosomal subunit protein bL17 (118 aa).

Belongs to the bacterial ribosomal protein bL17 family. As to quaternary structure, part of the 50S ribosomal subunit. Contacts protein L32.

The protein is Large ribosomal subunit protein bL17 of Campylobacter fetus subsp. fetus (strain 82-40).